The chain runs to 510 residues: Dolichyl-P-Man:Man5GlcNAc2-PP-dolichol alpha-1,3-mannosyltransferase Alg3 (510 aa).

Over 1–43 (MAPPKAASHRPAVRRKKSGTLVDSILDKYLNVRFFKYLLLEPA) the chain is Cytoplasmic. Residues 44-64 (ALPIVGLFVLLAELVINVVVI) form a helical membrane-spanning segment. The Lumenal portion of the chain corresponds to 65–97 (QRVPYTEIDWVAYMQECEGFLNGTTNYSLLRGD). The helical transmembrane segment at 98–118 (TGPLVYPAAFVYIYSALYYVT) threads the bilayer. The Cytoplasmic segment spans residues 119–125 (SHGTNVR). A helical membrane pass occupies residues 126–146 (LAQYIFAGIYLLQLALVLRLY). Residues 147–171 (SKSRKVPPYVLVLSAFTSYRIHSIY) lie on the Lumenal side of the membrane. Residues 172-192 (VLRLFNDPVAVLLLYAALNLF) form a helical membrane-spanning segment. Over 193–211 (LDRRWTLGSTFFSLAVGVK) the chain is Cytoplasmic. Residues 212–232 (MNILLFAPALLLFYLANLGLL) traverse the membrane as a helical segment. Position 233 (R233) is a topological domain, lumenal. The chain crosses the membrane as a helical span at residues 234-254 (TILQLAVCGVIQLLLGAPFLL). At 255-294 (THPVEYLRGSFDLGRIFEHKWTVNYRFLSRDVFENRTFHV) the chain is on the cytoplasmic side. The chain crosses the membrane as a helical span at residues 295 to 315 (SLLGLHLLLLLAFAKPIWTFF). The Lumenal portion of the chain corresponds to 316 to 403 (QSYVRLRRIE…YGIHFDRCTQ (88 aa)). Residues 337 to 358 (LQLKAQKRPKKVEKDKDKDQKK) are disordered. Positions 348-358 (VEKDKDKDQKK) are enriched in basic and acidic residues. The chain crosses the membrane as a helical span at residues 404 to 424 (LALLPFFLCNLVGVACSRSLH). Over 425–426 (YQ) the chain is Cytoplasmic. A helical membrane pass occupies residues 427-447 (FYVWYFHSLPYLAWSTPYSLG). At 448 to 464 (VRCLILGLIEYCWNTYP) the chain is on the lumenal side. A helical membrane pass occupies residues 465 to 485 (STNFSSAALHFTHIILLAGVA). The Cytoplasmic segment spans residues 486–510 (KQLIQTMRINNAAKREQQEQQKKLQ).

Belongs to the glycosyltransferase ALG3 family.

The protein localises to the endoplasmic reticulum membrane. The catalysed reaction is an alpha-D-Man-(1-&gt;2)-alpha-D-Man-(1-&gt;2)-alpha-D-Man-(1-&gt;3)-[alpha-D-Man-(1-&gt;6)]-beta-D-Man-(1-&gt;4)-beta-D-GlcNAc-(1-&gt;4)-alpha-D-GlcNAc-diphospho-di-trans,poly-cis-dolichol + a di-trans,poly-cis-dolichyl beta-D-mannosyl phosphate = an alpha-D-Man-(1-&gt;2)-alpha-D-Man-(1-&gt;2)-alpha-D-Man-(1-&gt;3)-[alpha-D-Man-(1-&gt;3)-alpha-D-Man-(1-&gt;6)]-beta-D-Man-(1-&gt;4)-beta-D-GlcNAc-(1-&gt;4)-alpha-D-GlcNAc-diphospho-di-trans,poly-cis-dolichol + a di-trans,poly-cis-dolichyl phosphate + H(+). Its pathway is protein modification; protein glycosylation. Its function is as follows. Probable alpha-1,3-mannosyltransferase involved in the N-glycosylation pathway. Involved in glycosylation of the TNF receptor grnd, regulating its ligand affinity. Required for normal epithelial growth and architecture. Suppressor of JNK-dependent intestinal stem cell proliferation. The sequence is that of Dolichyl-P-Man:Man5GlcNAc2-PP-dolichol alpha-1,3-mannosyltransferase Alg3 from Drosophila melanogaster (Fruit fly).